The following is a 233-amino-acid chain: Pyridoxine 5'-phosphate synthase (233 aa).

A 3-amino-2-oxopropyl phosphate-binding site is contributed by N6. Position 8–9 (8–9 (DH)) interacts with 1-deoxy-D-xylulose 5-phosphate. Position 17 (R17) interacts with 3-amino-2-oxopropyl phosphate. H42 (proton acceptor) is an active-site residue. 2 residues coordinate 1-deoxy-D-xylulose 5-phosphate: R44 and H49. The active-site Proton acceptor is the E69. 1-deoxy-D-xylulose 5-phosphate is bound at residue T99. Catalysis depends on H186, which acts as the Proton donor. 3-amino-2-oxopropyl phosphate contacts are provided by residues G187 and 208-209 (GH).

It belongs to the PNP synthase family. Homooctamer; tetramer of dimers.

It localises to the cytoplasm. The enzyme catalyses 3-amino-2-oxopropyl phosphate + 1-deoxy-D-xylulose 5-phosphate = pyridoxine 5'-phosphate + phosphate + 2 H2O + H(+). The protein operates within cofactor biosynthesis; pyridoxine 5'-phosphate biosynthesis; pyridoxine 5'-phosphate from D-erythrose 4-phosphate: step 5/5. Its function is as follows. Catalyzes the complicated ring closure reaction between the two acyclic compounds 1-deoxy-D-xylulose-5-phosphate (DXP) and 3-amino-2-oxopropyl phosphate (1-amino-acetone-3-phosphate or AAP) to form pyridoxine 5'-phosphate (PNP) and inorganic phosphate. This is Pyridoxine 5'-phosphate synthase from Anaplasma phagocytophilum (strain HZ).